Consider the following 349-residue polypeptide: Insulin gene enhancer protein isl-1 (349 aa).

LIM zinc-binding domains follow at residues 17-70 (CVGC…CKRD) and 79-133 (CAKC…RADH). Residues 181–240 (TTRVRTVLNEKQLHTLRTCYNANPRPDALMKEQLVEMTGLSPRVIRVWFQNKRCKDKKRS) constitute a DNA-binding region (homeobox). The disordered stretch occupies residues 312-349 (VNFSEGGPGSNSTGSEVASMSSQLPDTPNSMVASPIEA). Residues 321–343 (SNSTGSEVASMSSQLPDTPNSMV) show a composition bias toward polar residues.

Its subcellular location is the nucleus. In terms of biological role, DNA-binding transcriptional activator. Recognizes and binds to the consensus octamer binding site 5'-ATAATTAA-3' in promoter of target genes. Plays a fundamental role in the gene regulatory network essential for retinal ganglion cell (RGC) differentiation. May be involved in subtype specialization of primary motoneurons. May bind to insulin gene enhancer sequences. Essential for heart development. In Danio rerio (Zebrafish), this protein is Insulin gene enhancer protein isl-1 (isl1).